The sequence spans 353 residues: E3 ubiquitin-protein ligase TRIM63 (353 aa).

Residues 23–79 (CPICLEMFTKPVVILPCQHNLCRKCANDIFQAANPYWTSRGSSVSMSGGRFRCPTCR) form an RING-type zinc finger. Residues 74–218 (RCPTCRHEVI…LSQKFDTLYA (145 aa)) form an interaction with TTN region. The B box-type zinc finger occupies 117 to 159 (GSHPMCKEHEDEKINIYCLTCEVPTCSMCKVFGIHKACEVAPL). Positions 122, 125, 145, and 151 each coordinate Zn(2+). The stretch at 207–269 (EELSQKFDTL…VETAIQSLDE (63 aa)) forms a coiled coil. A COS domain is found at 267–325 (LDEPGGATFLLTAKQLIKSIVEASKGCQLGKTEQGFENMDFFTLDLEHIADALRAIDFG). A compositionally biased stretch (acidic residues) spans 326 to 344 (TDEEEEEFIEEEDQEEEES). Residues 326–353 (TDEEEEEFIEEEDQEEEESTEGKEEGHQ) form a disordered region.

In terms of assembly, homodimer. Homooligomer and heterooligomer. Interacts with SUMO2, titin/TTN and GMEB1. Interacts with TRIM54 and probably with TRIM55 and TNNI3. Forms a ternary complex with RACK1 and PRKCE. Interacts with CKM. As to expression, muscle specific. Selectively expressed in heart and skeletal muscle. Also expressed in the iris.

It is found in the cytoplasm. The protein localises to the nucleus. The protein resides in the myofibril. Its subcellular location is the sarcomere. It localises to the m line. It is found in the z line. The enzyme catalyses S-ubiquitinyl-[E2 ubiquitin-conjugating enzyme]-L-cysteine + [acceptor protein]-L-lysine = [E2 ubiquitin-conjugating enzyme]-L-cysteine + N(6)-ubiquitinyl-[acceptor protein]-L-lysine.. The protein operates within protein modification; protein ubiquitination. E3 ubiquitin ligase. Mediates the ubiquitination and subsequent proteasomal degradation of CKM, GMEB1 and HIBADH. Regulates the proteasomal degradation of muscle proteins under amino acid starvation, where muscle protein is catabolized to provide other organs with amino acids. Inhibits de novo skeletal muscle protein synthesis under amino acid starvation. Regulates proteasomal degradation of cardiac troponin I/TNNI3 and probably of other sarcomeric-associated proteins. May play a role in striated muscle atrophy and hypertrophy by regulating an anti-hypertrophic PKC-mediated signaling pathway. May regulate the organization of myofibrils through TTN in muscle cells. The protein is E3 ubiquitin-protein ligase TRIM63 (TRIM63) of Homo sapiens (Human).